An 88-amino-acid chain; its full sequence is MLKPSINEVLEKIDNRYYLVGTVSKRARKLIDGEEPYVSNKTKEKPVCVATKEVASGKITYRLLTEEEIEIEEARHHAEQHQQISEEE.

It belongs to the RNA polymerase subunit omega family. As to quaternary structure, the RNAP catalytic core consists of 2 alpha, 1 beta, 1 beta' and 1 omega subunit. When a sigma factor is associated with the core the holoenzyme is formed, which can initiate transcription.

The enzyme catalyses RNA(n) + a ribonucleoside 5'-triphosphate = RNA(n+1) + diphosphate. In terms of biological role, promotes RNA polymerase assembly. Latches the N- and C-terminal regions of the beta' subunit thereby facilitating its interaction with the beta and alpha subunits. This Clostridioides difficile (strain 630) (Peptoclostridium difficile) protein is DNA-directed RNA polymerase subunit omega.